The sequence spans 428 residues: L-lysine N6-monooxygenase MbtG (428 aa).

A signal peptide spans Met1–Ala20.

Belongs to the lysine N(6)-hydroxylase/L-ornithine N(5)-oxygenase family. FAD serves as cofactor.

It catalyses the reaction L-lysine + NADPH + O2 = N(6)-hydroxy-L-lysine + NADP(+) + H2O. The protein operates within siderophore biosynthesis; mycobactin biosynthesis. In terms of biological role, flavoprotein monooxygenase required for N-hydroxylation of the two acylated lysine residues during mycobactin assembly, thus producing the hydroxamate groups necessary for iron sequestration. Is also able, but less efficiently, to hydroxylate L-lysine (non acylated) in vitro. The chain is L-lysine N6-monooxygenase MbtG (mbtG) from Mycolicibacterium paratuberculosis (strain ATCC BAA-968 / K-10) (Mycobacterium paratuberculosis).